A 331-amino-acid chain; its full sequence is Lipoyl synthase (331 aa).

Positions M1–A33 are disordered. Residues A7 to A17 show a composition bias toward polar residues. Residues D21–A33 show a composition bias toward basic and acidic residues. [4Fe-4S] cluster-binding residues include C78, C83, C89, C104, C108, C111, and S318. A Radical SAM core domain is found at C89 to T307.

Belongs to the radical SAM superfamily. Lipoyl synthase family. [4Fe-4S] cluster is required as a cofactor.

The protein resides in the cytoplasm. The enzyme catalyses [[Fe-S] cluster scaffold protein carrying a second [4Fe-4S](2+) cluster] + N(6)-octanoyl-L-lysyl-[protein] + 2 oxidized [2Fe-2S]-[ferredoxin] + 2 S-adenosyl-L-methionine + 4 H(+) = [[Fe-S] cluster scaffold protein] + N(6)-[(R)-dihydrolipoyl]-L-lysyl-[protein] + 4 Fe(3+) + 2 hydrogen sulfide + 2 5'-deoxyadenosine + 2 L-methionine + 2 reduced [2Fe-2S]-[ferredoxin]. It participates in protein modification; protein lipoylation via endogenous pathway; protein N(6)-(lipoyl)lysine from octanoyl-[acyl-carrier-protein]: step 2/2. Its function is as follows. Catalyzes the radical-mediated insertion of two sulfur atoms into the C-6 and C-8 positions of the octanoyl moiety bound to the lipoyl domains of lipoate-dependent enzymes, thereby converting the octanoylated domains into lipoylated derivatives. The protein is Lipoyl synthase of Cupriavidus necator (strain ATCC 17699 / DSM 428 / KCTC 22496 / NCIMB 10442 / H16 / Stanier 337) (Ralstonia eutropha).